A 311-amino-acid chain; its full sequence is Acetyl-coenzyme A carboxylase carboxyl transferase subunit alpha (311 aa).

One can recognise a CoA carboxyltransferase C-terminal domain in the interval 36-286 (KLEKEVEKTF…KEYFIKSLAE (251 aa)).

It belongs to the AccA family. In terms of assembly, acetyl-CoA carboxylase is a heterohexamer composed of biotin carboxyl carrier protein (AccB), biotin carboxylase (AccC) and two subunits each of ACCase subunit alpha (AccA) and ACCase subunit beta (AccD).

The protein resides in the cytoplasm. It catalyses the reaction N(6)-carboxybiotinyl-L-lysyl-[protein] + acetyl-CoA = N(6)-biotinyl-L-lysyl-[protein] + malonyl-CoA. It participates in lipid metabolism; malonyl-CoA biosynthesis; malonyl-CoA from acetyl-CoA: step 1/1. Functionally, component of the acetyl coenzyme A carboxylase (ACC) complex. First, biotin carboxylase catalyzes the carboxylation of biotin on its carrier protein (BCCP) and then the CO(2) group is transferred by the carboxyltransferase to acetyl-CoA to form malonyl-CoA. The chain is Acetyl-coenzyme A carboxylase carboxyl transferase subunit alpha from Aliarcobacter butzleri (strain RM4018) (Arcobacter butzleri).